Here is a 368-residue protein sequence, read N- to C-terminus: Glutamate 5-kinase (368 aa).

ATP is bound at residue Lys-9. Residues Ser-49, Asp-136, and Asn-148 each contribute to the substrate site. ATP is bound by residues 168–169 (TD) and 210–216 (TGGMMTK). Positions 275-353 (AGIITIDNGA…ADIENVLGYE (79 aa)) constitute a PUA domain.

This sequence belongs to the glutamate 5-kinase family.

The protein resides in the cytoplasm. It carries out the reaction L-glutamate + ATP = L-glutamyl 5-phosphate + ADP. It participates in amino-acid biosynthesis; L-proline biosynthesis; L-glutamate 5-semialdehyde from L-glutamate: step 1/2. Functionally, catalyzes the transfer of a phosphate group to glutamate to form L-glutamate 5-phosphate. The chain is Glutamate 5-kinase from Haemophilus influenzae (strain ATCC 51907 / DSM 11121 / KW20 / Rd).